Consider the following 300-residue polypeptide: uncharacterized protein (300 aa).

4 consecutive CBS domains span residues R10 to V68, F88 to V148, M152 to L207, and I226 to I284.

This is an uncharacterized protein from Thermofilum pendens.